Here is a 447-residue protein sequence, read N- to C-terminus: Tubulin beta-2 chain (447 aa).

GTP contacts are provided by glutamine 11, glutamate 69, serine 138, glycine 142, threonine 143, glycine 144, asparagine 204, and asparagine 226. Glutamate 69 is a Mg(2+) binding site. Residues 426–447 (QDAGVDEEEEEYEEEAPLEEEV) form a disordered region. A compositionally biased stretch (acidic residues) spans 429–447 (GVDEEEEEYEEEAPLEEEV).

Belongs to the tubulin family. As to quaternary structure, dimer of alpha and beta chains. A typical microtubule is a hollow water-filled tube with an outer diameter of 25 nm and an inner diameter of 15 nM. Alpha-beta heterodimers associate head-to-tail to form protofilaments running lengthwise along the microtubule wall with the beta-tubulin subunit facing the microtubule plus end conferring a structural polarity. Microtubules usually have 13 protofilaments but different protofilament numbers can be found in some organisms and specialized cells. Mg(2+) serves as cofactor.

Its subcellular location is the cytoplasm. The protein resides in the cytoskeleton. Tubulin is the major constituent of microtubules, a cylinder consisting of laterally associated linear protofilaments composed of alpha- and beta-tubulin heterodimers. Microtubules grow by the addition of GTP-tubulin dimers to the microtubule end, where a stabilizing cap forms. Below the cap, tubulin dimers are in GDP-bound state, owing to GTPase activity of alpha-tubulin. This chain is Tubulin beta-2 chain (TUB2), found in Colletotrichum gloeosporioides (Anthracnose fungus).